Consider the following 317-residue polypeptide: Melanocyte-stimulating hormone receptor (317 aa).

The Extracellular portion of the chain corresponds to 1–37 (MPVQGSQRRLLGSLNSTPTATPHLGLAANQTGAWCLE). A glycan (N-linked (GlcNAc...) asparagine) is linked at Asn29. A helical membrane pass occupies residues 38-63 (VSIPDGLFLSLGLVSLVENVLVVTAI). Topologically, residues 64–72 (AKNRNLHSP) are cytoplasmic. Residues 73–93 (MYCFICCLALSDLLVSGSNML) traverse the membrane as a helical segment. The Extracellular segment spans residues 94-118 (ETAVTLLLEAGALAARAAVVQQLDN). Residues 119-140 (VIDVITCSSMLSSLCFLGAIAV) form a helical membrane-spanning segment. Residues 141–163 (DRYISIFYALRYHSIVTLPRARR) lie on the Cytoplasmic side of the membrane. The chain crosses the membrane as a helical span at residues 164–183 (AVAAIWVASVLFSMLFIAYY). Over 184 to 191 (DHAAVLLC) the chain is Extracellular. The helical transmembrane segment at 192–211 (LVVFFLAMLVLMAVLYVHML) threads the bilayer. The Cytoplasmic portion of the chain corresponds to 212–240 (ARACQHAQGIARLHKRQRPAHQGFGLKGA). The chain crosses the membrane as a helical span at residues 241-266 (ATLTILLGIFFLCWGPFFLHLTLIVL). Residues 267 to 279 (CPQHPTCSCIFKN) lie on the Extracellular side of the membrane. A helical membrane pass occupies residues 280–300 (FNLFLALIICNAIIDPLIYAF). The Cytoplasmic segment spans residues 301-317 (RSQELRRTLKEVLLCSW). Cys315 is lipidated: S-palmitoyl cysteine.

It belongs to the G-protein coupled receptor 1 family. Interacts with MGRN1, but does not undergo MGRN1-mediated ubiquitination; this interaction competes with GNAS-binding and thus inhibits agonist-induced cAMP production. Interacts with OPN3; the interaction results in a decrease in MC1R-mediated cAMP signaling and ultimately a decrease in melanin production in melanocytes.

The protein localises to the cell membrane. Functionally, receptor for MSH (alpha, beta and gamma) and ACTH. The activity of this receptor is mediated by G proteins which activate adenylate cyclase. Mediates melanogenesis, the production of eumelanin (black/brown) and phaeomelanin (red/yellow), via regulation of cAMP signaling in melanocytes. This Allenopithecus nigroviridis (Allen's swamp monkey) protein is Melanocyte-stimulating hormone receptor (MC1R).